Consider the following 426-residue polypeptide: uncharacterized protein (426 aa).

The first 23 residues, 1–23 (MKKFILFLIILLFSIYFLNVSSA), serve as a signal peptide directing secretion.

This is an uncharacterized protein from Methanocaldococcus jannaschii (strain ATCC 43067 / DSM 2661 / JAL-1 / JCM 10045 / NBRC 100440) (Methanococcus jannaschii).